The chain runs to 691 residues: Elongation factor G (691 aa).

Positions 8–282 (EKTRNIGIMA…AVVDYLPSPV (275 aa)) constitute a tr-type G domain. Residues 17–24 (AHIDAGKT), 81–85 (DTPGH), and 135–138 (NKMD) each bind GTP.

The protein belongs to the TRAFAC class translation factor GTPase superfamily. Classic translation factor GTPase family. EF-G/EF-2 subfamily.

The protein resides in the cytoplasm. Functionally, catalyzes the GTP-dependent ribosomal translocation step during translation elongation. During this step, the ribosome changes from the pre-translocational (PRE) to the post-translocational (POST) state as the newly formed A-site-bound peptidyl-tRNA and P-site-bound deacylated tRNA move to the P and E sites, respectively. Catalyzes the coordinated movement of the two tRNA molecules, the mRNA and conformational changes in the ribosome. The chain is Elongation factor G from Caldicellulosiruptor saccharolyticus (strain ATCC 43494 / DSM 8903 / Tp8T 6331).